Reading from the N-terminus, the 211-residue chain is N-(5'-phosphoribosyl)anthranilate isomerase (211 aa).

It belongs to the TrpF family.

The catalysed reaction is N-(5-phospho-beta-D-ribosyl)anthranilate = 1-(2-carboxyphenylamino)-1-deoxy-D-ribulose 5-phosphate. It functions in the pathway amino-acid biosynthesis; L-tryptophan biosynthesis; L-tryptophan from chorismate: step 3/5. The polypeptide is N-(5'-phosphoribosyl)anthranilate isomerase (Zymomonas mobilis subsp. mobilis (strain ATCC 31821 / ZM4 / CP4)).